The primary structure comprises 1719 residues: Serine/threonine-protein kinase MRCK alpha (1719 aa).

The region spanning 77–343 (FEILKVIGRG…IEDFKKHPFF (267 aa)) is the Protein kinase domain. ATP-binding positions include 83-91 (IGRGAFGEV) and Lys-106. Asp-201 (proton acceptor) is an active-site residue. Phosphoserine; by autocatalysis is present on residues Ser-222 and Ser-234. Phosphothreonine; by autocatalysis is present on Thr-240. The AGC-kinase C-terminal domain maps to 344–414 (SGIDWDNIRN…TSSCVLSDRS (71 aa)). Coiled-coil stretches lie at residues 437–670 (NNLA…KQKQ), 713–820 (SEIK…WEAQ), and 880–943 (LELQ…SEKG). The Phorbol-ester/DAG-type zinc-finger motif lies at 999–1049 (THQFFVKSFTAPTKCHQCTSLMVGLIRQGCSCEVCGFSCHITCVNKAPTVC). The PH domain maps to 1069–1188 (GTAYEGHVRI…WVGVLSELHK (120 aa)). Residues 1214-1486 (IKTTQAAAII…RPLNTEGSLN (273 aa)) enclose the CNH domain. The residue at position 1532 (Ser-1532) is a Phosphoserine. The 14-residue stretch at 1558-1571 (ISNPTNFNHIAHMG) folds into the CRIB domain. Residues 1579–1719 (LKDLPMNPRP…ESTDRGSWDP (141 aa)) are disordered. A compositionally biased stretch (polar residues) spans 1591–1606 (SRTVFSGSVSIPSITK). Residues Ser-1598, Ser-1600, Ser-1616, Ser-1638, Ser-1651, Ser-1656, Ser-1680, Ser-1706, and Ser-1708 each carry the phosphoserine modification. A compositionally biased stretch (low complexity) spans 1612–1627 (GRSMSASSGLSARSSA). Low complexity predominate over residues 1652-1661 (PSEGSLSSGG).

It belongs to the protein kinase superfamily. AGC Ser/Thr protein kinase family. DMPK subfamily. As to quaternary structure, homodimer and homotetramer via the coiled coil regions. Interacts tightly with GTP-bound but not GDP-bound CDC42. Forms a tripartite complex with MYO18A and LRP35A with the latter acting as an adapter connecting CDC42BPA and MYO18A. LRP35A binding results in activation of CDC42BPA by abolition of its negative autoregulation. Interacts with LURAP1. Interacts (via AGC-kinase C-terminal domain) with FAM89B/LRAP25 (via LRR repeat). Forms a tripartite complex with FAM89B/LRAP25 and LIMK1. Requires Mg(2+) as cofactor. Post-translationally, proteolytically cleaved by caspases upon apoptosis induction. The cleavage at Asp-478 by CASP3 increases its kinase activity (in vitro).

It localises to the cytoplasm. The protein localises to the cell projection. It is found in the lamellipodium. It catalyses the reaction L-seryl-[protein] + ATP = O-phospho-L-seryl-[protein] + ADP + H(+). The catalysed reaction is L-threonyl-[protein] + ATP = O-phospho-L-threonyl-[protein] + ADP + H(+). Maintained in an inactive, closed conformation by an interaction between the kinase domain and the negative autoregulatory C-terminal coiled-coil region. Agonist binding to the phorbol ester binding site disrupts this, releasing the kinase domain to allow N-terminus-mediated dimerization and kinase activation by transautophosphorylation. Inhibited by chelerythrine chloride. Functionally, serine/threonine-protein kinase which is an important downstream effector of CDC42 and plays a role in the regulation of cytoskeleton reorganization and cell migration. Regulates actin cytoskeletal reorganization via phosphorylation of PPP1R12C and MYL9/MLC2. In concert with MYO18A and LRP35A, is involved in modulating lamellar actomyosin retrograde flow that is crucial to cell protrusion and migration. Phosphorylates: PPP1R12A and LIMK2. May play a role in TFRC-mediated iron uptake. In concert with FAM89B/LRAP25 mediates the targeting of LIMK1 to the lamellipodium resulting in its activation and subsequent phosphorylation of CFL1 which is important for lamellipodial F-actin regulation. Triggers the formation of an extrusion apical actin ring required for epithelial extrusion of apoptotic cells. This Mus musculus (Mouse) protein is Serine/threonine-protein kinase MRCK alpha (Cdc42bpa).